Reading from the N-terminus, the 677-residue chain is Transketolase 1 (677 aa).

A substrate-binding site is contributed by histidine 27. Thiamine diphosphate is bound by residues histidine 66 and 114-116 (GPL). A Mg(2+)-binding site is contributed by aspartate 155. Thiamine diphosphate-binding residues include glycine 156 and asparagine 185. Asparagine 185 and isoleucine 187 together coordinate Mg(2+). Residues histidine 261, arginine 356, and serine 383 each coordinate substrate. Thiamine diphosphate is bound at residue histidine 261. Positions 415 and 442 each coordinate thiamine diphosphate. Glutamate 415 acts as the Proton donor in catalysis. Residues histidine 466, aspartate 474, and arginine 525 each coordinate substrate.

The protein belongs to the transketolase family. As to quaternary structure, homodimer. Mg(2+) is required as a cofactor. Ca(2+) serves as cofactor. The cofactor is Mn(2+). It depends on Co(2+) as a cofactor. Requires thiamine diphosphate as cofactor.

The enzyme catalyses D-sedoheptulose 7-phosphate + D-glyceraldehyde 3-phosphate = aldehydo-D-ribose 5-phosphate + D-xylulose 5-phosphate. Its function is as follows. Catalyzes the transfer of a two-carbon ketol group from a ketose donor to an aldose acceptor, via a covalent intermediate with the cofactor thiamine pyrophosphate. This is Transketolase 1 (TKT1) from Candida albicans (Yeast).